A 334-amino-acid polypeptide reads, in one-letter code: Cytoskeleton protein RodZ (334 aa).

Residues 1-111 are Cytoplasmic-facing; sequence MNTEATHDQN…LGKRRKKRDG (111 aa). One can recognise an HTH cro/C1-type domain in the interval 19–71; the sequence is LRNAREQLGLSQQAVAERLCLKVSTVRDIEEDKAPSDLASTFLRGYIRSYARL. The H-T-H motif DNA-binding region spans 30-49; that stretch reads QQAVAERLCLKVSTVRDIEE. Residues 112–132 form a helical; Signal-anchor for type II membrane protein membrane-spanning segment; the sequence is WLMSFTWLVLFVVVGLTGAWW. The Periplasmic segment spans residues 133-334; sequence WQNHKAHQEE…TLNAEPTPAQ (202 aa). The segment at 152–210 is disordered; the sequence is AGLNADKDSGQSVPLDTGAVTSQDTTPAQTAPAPATPVDSTAATQTPAPTAAATQNTVV. Polar residues predominate over residues 161–175; it reads GQSVPLDTGAVTSQD. Over residues 176-210 the composition is skewed to low complexity; sequence TTPAQTAPAPATPVDSTAATQTPAPTAAATQNTVV.

The protein belongs to the RodZ family.

It localises to the cell inner membrane. Functionally, cytoskeletal protein that is involved in cell-shape control through regulation of the length of the long axis. In Salmonella gallinarum (strain 287/91 / NCTC 13346), this protein is Cytoskeleton protein RodZ.